The chain runs to 3942 residues: Protein bassoon (3942 aa).

A disordered region spans residues 1–158; it reads MGNEASLEGG…PTSPYSVPQI (158 aa). Glycine 2 carries N-myristoyl glycine lipidation. Residues 9-29 show a composition bias toward gly residues; it reads GGAGEGPLPPGGSGLGPGPGA. A compositionally biased stretch (low complexity) spans 31–52; it reads KPPSALAGGGQLPVAGAARAAG. The span at 53–71 shows a compositional bias: pro residues; the sequence is PPTPGLGPVPGPGPGPGPG. The 5 X 2 AA tandem repeats of P-G stretch occupies residues 62 to 71; sequence PGPGPGPGPG. Composition is skewed to polar residues over residues 85–98 and 127–154; these read SQRT…QASA and QVDS…SPYS. Serine 142 carries the phosphoserine modification. Arginine 145 carries the post-translational modification Omega-N-methylarginine. 2 consecutive C4-type zinc fingers follow at residues 167–190 and 195–217; these read CPIC…CTQC and CNQC…CLNC. Disordered stretches follow at residues 228-341 and 362-457; these read TTAP…EQTQ and LMSV…KTMP. Positions 230–240 are enriched in polar residues; it reads APRSKSQQQLH. A phosphoserine mark is found at serine 241 and serine 245. A compositionally biased stretch (polar residues) spans 362–379; sequence LMSVQPEADTQGQPSPSK. Positions 395–407 are enriched in pro residues; the sequence is PRPPGSGPGPGPT. 2 consecutive C4-type zinc fingers follow at residues 464–487 and 492–514; these read CPLC…CTAC and CNLC…CLNC. Disordered regions lie at residues 525-937, 950-1258, 1309-1553, and 1573-1625; these read GEPA…LQGG, GSYG…VAES, MDPM…WQQS, and RMVH…PSAG. Over residues 528 to 541 the composition is skewed to pro residues; that stretch reads APLPLPTPQQPPAG. Tandem repeats lie at residues 570–576, 577–583, 584–590, 591–597, and 598–604. A 5 X 7 AA tandem repeats of K-A-S-P-Q-[AT]-[AT] region spans residues 570–604; sequence KASPQATKASPQATKASPQATKASPQTTKASPQAK. The segment covering 573–600 has biased composition (polar residues); sequence PQATKASPQATKASPQATKASPQTTKAS. The segment covering 632-645 has biased composition (pro residues); it reads VPKPPPETTVPPGT. Positions 684–693 are enriched in polar residues; sequence QDLSRSPQSL. Low complexity predominate over residues 694–708; sequence SDTGYSSDGVSSSQS. Positions 709-718 are enriched in polar residues; sequence EITGVVQQEV. Acidic residues-rich tracts occupy residues 787 to 802 and 865 to 876; these read FDSD…EDDS and SAEEDNLEEDDT. The residue at position 881 (arginine 881) is an Omega-N-methylarginine. The span at 895–905 shows a compositional bias: basic and acidic residues; that stretch reads PRPESSQEPKR. Residue serine 980 is modified to Phosphoserine. Residues 994–1011 are compositionally biased toward low complexity; it reads PASTPSYTSGTSPTSLSS. The segment covering 1049 to 1062 has biased composition (acidic residues); it reads DSSEEEELREEEEL. Residues serine 1050 and serine 1051 each carry the phosphoserine modification. Residues 1063–1076 show a composition bias toward basic and acidic residues; that stretch reads LREQEKMREVEQQR. At serine 1100 the chain carries Phosphoserine. Position 1102 is a phosphothreonine (threonine 1102). Serine 1108 and serine 1114 each carry phosphoserine. The span at 1117 to 1132 shows a compositional bias: basic and acidic residues; it reads EELRQAAEMEELHRSS. Composition is skewed to low complexity over residues 1133–1143 and 1173–1190; these read CSEYSPSPSLD and SPTE…SGRP. The span at 1192–1207 shows a compositional bias: basic and acidic residues; that stretch reads KSAEEAYEDMMRKAEM. Residues 1209–1219 are compositionally biased toward low complexity; it reads QRQQGQVAGAR. Positions 1226 to 1240 are enriched in polar residues; sequence SQPTGPRSQGSFEYQ. Residue serine 1236 is modified to Phosphoserine. Low complexity predominate over residues 1333–1343; sequence SFSTSTSSDSS. The O-linked (GlcNAc) threonine glycan is linked to threonine 1354. The segment covering 1357-1366 has biased composition (basic and acidic residues); that stretch reads FAKEPQDPLK. Residues 1370–1438 show a composition bias toward polar residues; the sequence is SPVSSTLTSK…TTANYGSQTE (69 aa). Threonine 1395 is a glycosylation site (O-linked (GlcNAc) threonine). Serine 1482, serine 1491, and serine 1493 each carry phosphoserine. A compositionally biased stretch (low complexity) spans 1488–1498; the sequence is STPSESPTFSP. 2 stretches are compositionally biased toward polar residues: residues 1508 to 1522 and 1573 to 1609; these read EFST…SSDI and RMVH…SQMP. Serine 1707 carries an O-linked (GlcNAc) serine glycan. Omega-N-methylarginine occurs at positions 1792 and 1796. Asymmetric dimethylarginine; alternate is present on arginine 1806. An Omega-N-methylarginine; alternate modification is found at arginine 1806. Arginine 1818 bears the Omega-N-methylarginine mark. 2 disordered regions span residues 1831–1865 and 1926–1977; these read GVGL…TRKP and PSAP…QRPY. Over residues 1844 to 1856 the composition is skewed to basic and acidic residues; that stretch reads AEPHRATPAELRS. Threonine 1934 carries O-linked (GlcNAc) threonine glycosylation. A phosphoserine mark is found at serine 1990 and serine 2046. Residues arginine 2051 and arginine 2081 each carry the omega-N-methylarginine modification. Asymmetric dimethylarginine occurs at positions 2255, 2265, and 2270. An O-linked (GlcNAc) threonine glycan is attached at threonine 2318. 3 disordered regions span residues 2327–2378, 2476–2504, and 2524–2663; these read PVAP…KQQE, EQKQ…TELA, and TEGP…STTA. Residues 2329-2342 are compositionally biased toward pro residues; it reads APAPGPAPAPPPGQ. Basic and acidic residues predominate over residues 2361-2378; the sequence is ASEKEEASQEDRQRKQQE. 2 coiled-coil regions span residues 2366–2422 and 2453–2483; these read EASQ…LVQR and LAQQ…RQKA. Threonine 2524 is a glycosylation site (O-linked (GlcNAc) threonine). Over residues 2541–2551 the composition is skewed to polar residues; it reads SSASDMSLQTE. The residue at position 2578 (serine 2578) is a Phosphoserine. Phosphothreonine is present on residues threonine 2595 and threonine 2622. Over residues 2643–2655 the composition is skewed to basic and acidic residues; sequence RHSDSGSDSKHDA. Threonine 2700 carries O-linked (GlcNAc) threonine glycosylation. Residues 2730–3278 form an interaction with DAO region; it reads EPDGQAQGVA…GGVSGRPGKD (549 aa). Serine 2811, serine 2860, and serine 2866 each carry phosphoserine. Positions 2854–2874 are disordered; that stretch reads TLQRSLSDPKPLSPTAEESAK. Threonine 2945 is a glycosylation site (O-linked (GlcNAc) threonine). Phosphoserine is present on serine 3022. 3 disordered regions span residues 3051–3409, 3431–3560, and 3581–3917; these read PATP…LTSR, YYGV…PRAH, and EAYH…KILP. The segment covering 3073 to 3083 has biased composition (polar residues); it reads TAGSSGPTQNG. Low complexity predominate over residues 3089 to 3114; that stretch reads APTYTGPSTYPAPTYPPGTGYPAEPG. Residues 3202 to 3211 show a composition bias toward basic and acidic residues; that stretch reads KAPEHPRGSD. Over residues 3212 to 3237 the composition is skewed to polar residues; that stretch reads RSSVSQSPAPTYPSDSHYTSLEQNVP. The residue at position 3301 (serine 3301) is a Phosphoserine. 2 stretches are compositionally biased toward basic and acidic residues: residues 3330-3342 and 3372-3391; these read GDSD…RADK and QGME…KDVE. The residue at position 3382 (serine 3382) is a Phosphoserine. A compositionally biased stretch (low complexity) spans 3447–3461; sequence YGSSSRSRMASAYSG. The segment covering 3464–3487 has biased composition (basic and acidic residues); sequence LSSHDYSSRGKGYERERDTAERLQ. Residue arginine 3502 is modified to Omega-N-methylarginine. The span at 3520–3534 shows a compositional bias: low complexity; sequence PLGRPRPAGGALPPG. 2 stretches are compositionally biased toward basic and acidic residues: residues 3549 to 3560 and 3592 to 3602; these read VQEHVKDGPRAH and WFDKPRDARSD. Residues 3652-3665 are compositionally biased toward basic residues; that stretch reads EHRHHSDHGRHSGR. Residues 3666–3690 show a composition bias toward basic and acidic residues; that stretch reads HAGEEPGRRAAKPHARDMGRHEARP. Low complexity predominate over residues 3750-3820; sequence TQAQPQMQGR…QARLQPQSQP (71 aa). At arginine 3823 the chain carries Omega-N-methylarginine. The span at 3835–3851 shows a compositional bias: pro residues; that stretch reads KPQPGPTTAPGPQPAGP. The segment covering 3856-3891 has biased composition (low complexity); it reads QASSSKPPAAKAPQQGRAPQAQTTPGPGPAGAKPGA.

Interacts with PCLO, ERC2/CAST1, RIMS1 and UNC13A. Interacts with TPRG1L. Interacts with DYNLL1 and DYNLL2; these interactions potentially link PTVs to dynein and myosin V motor complexes. Interacts with ATG5; this interaction is important for the regulation of presynaptic autophagy. Interacts (via C-terminus) with TRIO (via N-terminus). Interacts with CTBP1. Interacts with SIAH1; this interaction negatively regulates SIAH1 E3 ligase activity. Interacts (via coiled region) with DAO; the interaction is direct. Myristoylated. The N-terminal myristoylation is not sufficient for presynaptic localization. In terms of tissue distribution, expressed in brain and retina.

It is found in the cytoplasm. It localises to the presynaptic active zone. The protein localises to the cytoskeleton. The protein resides in the cytoplasmic vesicle. Its subcellular location is the secretory vesicle. It is found in the synaptic vesicle membrane. Scaffold protein of the presynaptic cytomatrix at the active zone (CAZ) which is the place in the synapse where neurotransmitter is released. After synthesis, participates in the formation of Golgi-derived membranous organelles termed Piccolo-Bassoon transport vesicles (PTVs) that are transported along axons to sites of nascent synaptic contacts. At the presynaptic active zone, regulates the spatial organization of synaptic vesicle cluster, the protein complexes that execute membrane fusion and compensatory endocytosis. Also functions in processes other than assembly such as the regulation of specific presynaptic protein ubiquitination by interacting with SIAH1 or the regulation of presynaptic autophagy by associating with ATG5. Also mediates synapse to nucleus communication leading to reconfiguration of gene expression by associating with the transcriptional corepressor CTBP1 and by subsequently reducing the size of its pool available for nuclear import. Inhibits the activity of the proportion of DAO enzyme that localizes to the presynaptic active zone, which may modulate synaptic transmission. The sequence is that of Protein bassoon from Mus musculus (Mouse).